The following is a 300-amino-acid chain: 2-methylisocitrate lyase (300 aa).

53–55 serves as a coordination point for substrate; the sequence is SGD. D92 and D94 together coordinate Mg(2+). Residues 129–130, R162, E192, 214–216, R245, and R274 each bind substrate; these read CG and NMT.

Belongs to the isocitrate lyase/PEP mutase superfamily. Methylisocitrate lyase family. The cofactor is Mg(2+).

The enzyme catalyses 3-hydroxybutane-1,2,3-tricarboxylate = pyruvate + succinate. Its function is as follows. Involved in the methylcitric acid cycle. Catalyzes the cleavage of 2-methylisocitrate to yield pyruvate and succinate. In Halalkalibacterium halodurans (strain ATCC BAA-125 / DSM 18197 / FERM 7344 / JCM 9153 / C-125) (Bacillus halodurans), this protein is 2-methylisocitrate lyase.